A 308-amino-acid chain; its full sequence is 11-beta-hydroxysteroid dehydrogenase-like 2 (308 aa).

The helical; Signal-anchor for type II membrane protein transmembrane segment at 10–30 threads the bilayer; sequence FLLPPLTISFLVLFYPFYLFT. NADP(+) contacts are provided by residues 53–79 and Asp-104; that span reads GASS…VARR. Ser-183 contacts substrate. Catalysis depends on Tyr-196, which acts as the Proton acceptor. Residues 196 to 200 and Lys-200 contribute to the NADP(+) site; that span reads YSASK.

It belongs to the short-chain dehydrogenases/reductases (SDR) family.

The protein resides in the membrane. This chain is 11-beta-hydroxysteroid dehydrogenase-like 2 (HSD2), found in Arabidopsis thaliana (Mouse-ear cress).